A 53-amino-acid polypeptide reads, in one-letter code: Zinc metalloproteinase-disintegrin-like alborhagin (53 aa).

The protein belongs to the venom metalloproteinase (M12B) family. P-III subfamily. P-IIIb sub-subfamily. As to quaternary structure, monomer. It depends on Zn(2+) as a cofactor. Post-translationally, contains numerous disulfide bonds. Glycosylated. As to expression, expressed by the venom gland.

The protein localises to the secreted. With respect to regulation, alborhagin-induced platelet aggregation, but not shape change, is inhibited by EDTA, suggesting that the platelet activation (shape change) is independent of divalent cation or metalloproteinase activity. Functionally, induces platelet activation and glycoprotein VI (GP6)-dependent platelet aggregation. Induces ectodomain cleavage of GP6 by activating endogenous platelet metalloproteinases (probably ADAM10). Has fibrinogenolytic activity against the alpha chain of fibrinogen (FGA). Recognizes distinct binding sites as convulxin, since alborhagin has minimal effect on convulxin binding to GPVI-expressing cells. Disintegrin alborhagin-C: 42 kDa fragment of alborhagin autoproteolysed that does not show platelet activation. This chain is Zinc metalloproteinase-disintegrin-like alborhagin, found in Trimeresurus albolabris (White-lipped pit viper).